A 91-amino-acid polypeptide reads, in one-letter code: Small ribosomal subunit protein bS18 (91 aa).

It belongs to the bacterial ribosomal protein bS18 family. As to quaternary structure, part of the 30S ribosomal subunit. Forms a tight heterodimer with protein bS6.

Functionally, binds as a heterodimer with protein bS6 to the central domain of the 16S rRNA, where it helps stabilize the platform of the 30S subunit. The chain is Small ribosomal subunit protein bS18 from Burkholderia ambifaria (strain MC40-6).